A 320-amino-acid chain; its full sequence is Olfactory receptor 51E2 (320 aa).

The Extracellular segment spans residues 1–27 (MSSCNFTHATFLLIGIPGLEEAHFWFG). Asn5 carries N-linked (GlcNAc...) asparagine glycosylation. Residues 28–48 (FPLLSMYAVALFGNCIVVFIV) form a helical membrane-spanning segment. Over 49 to 53 (RTERS) the chain is Cytoplasmic. A helical transmembrane segment spans residues 54 to 74 (LHAPMYLFLCMLAAIDLALST). Residues 75-98 (STMPKILALFWFDSREITFDACLA) are Extracellular-facing. A disulfide bridge links Cys96 with Cys178. Residues 99–119 (QMFFIHTLSAIESTILLAMAF) form a helical membrane-spanning segment. The Cytoplasmic portion of the chain corresponds to 120-141 (DRYVAICHPLRHAAVLNNTVTV). Residues 142–162 (QIGMVALVRGSLFFFPLPLLI) form a helical membrane-spanning segment. The Extracellular portion of the chain corresponds to 163-200 (KRLAFCHSNVLSHSYCVHQDVMKLAYTDTLPNVVYGLT). Residues 201-221 (AILLVMGVDVMFISLSYFLII) form a helical membrane-spanning segment. Topologically, residues 222 to 239 (RTVLQLPSKSERAKAFGT) are cytoplasmic. A helical membrane pass occupies residues 240 to 260 (CVSHISVVLAFYVPLIGLSVV). Residues 261 to 269 (HRFGNSLDP) lie on the Extracellular side of the membrane. A helical membrane pass occupies residues 270–290 (IVHVLMGDVYLLLPPVINPII). The Cytoplasmic portion of the chain corresponds to 291–320 (YGAKTKQIRTRVLAMFKISCDKDIEAGGNT).

The protein belongs to the G-protein coupled receptor 1 family. In terms of tissue distribution, in brain, expressed in medulla oblongata by cells close to the fourth ventricle, in the area postrema, the nucleus tractus solitarius. Expressed in olfactory epithelium and vomeronasal organ. Expressed in kidney by large renal vessels, renal afferent arterioles, and extrarenal vascular beds. In small resistance vessels the expression is restricted to cells of the juxtaglomerular afferent arteriole, which mediate renin secretion. Also detected in small blood vessels in a variety of tissues including heart, diaphragm, skeletal muscle, and skin. In the heart, esophagus, and stomach it is detected in axons of autonomic neurons and neurons of the enteric plexus. Also detected in colon and liver. Expressed in the glomus cells of the carotid body.

Its subcellular location is the cell membrane. It localises to the early endosome membrane. Olfactory receptor. The activity of this receptor is probably mediated by G-proteins which induce elevation of intracellular Ca(2+), cAMP and activation of phosphorylation of the protein kinases PKA and MAPK3/MAPK1. Activation of OR51E2 may affect melanocyte proliferation, differentiation, and melanogenesis and may increase proliferation and migration of primary retinal pigment epithelial (RPE) cells. Activated by the short chain fatty acids (SCFA), acetate and propionate. In response to SCFA, may positively regulate renin secretion and increase blood pressure. May also be activated by steroid hormones and regulate cell proliferation. Activated by L-lactate in glomus cells. This chain is Olfactory receptor 51E2 (Or51e2), found in Mus musculus (Mouse).